Reading from the N-terminus, the 166-residue chain is Transcription elongation factor GreA (166 aa).

Belongs to the GreA/GreB family.

Necessary for efficient RNA polymerase transcription elongation past template-encoded arresting sites. The arresting sites in DNA have the property of trapping a certain fraction of elongating RNA polymerases that pass through, resulting in locked ternary complexes. Cleavage of the nascent transcript by cleavage factors such as GreA or GreB allows the resumption of elongation from the new 3'terminus. GreA releases sequences of 2 to 3 nucleotides. The protein is Transcription elongation factor GreA of Anaeromyxobacter sp. (strain K).